A 449-amino-acid polypeptide reads, in one-letter code: NADH-quinone oxidoreductase subunit H (449 aa).

A run of 9 helical transmembrane segments spans residues 23–43, 93–113, 137–157, 176–196, 209–229, 258–280, 300–320, 332–352, and 368–388; these read WWVI…LTLF, AVYL…FSVI, VAVL…VLGG, MISY…YAGS, LWYG…MVGE, ALFF…TLFL, YWPL…FIWL, FMAF…VAVA, and LLIG…IGGA. Polar residues predominate over residues 427–442; that stretch reads RSSPIASSMPQPSAAT. Residues 427–449 form a disordered region; sequence RSSPIASSMPQPSAATRSAGEEI.

Belongs to the complex I subunit 1 family. As to quaternary structure, NDH-1 is composed of 14 different subunits. Subunits NuoA, H, J, K, L, M, N constitute the membrane sector of the complex.

It is found in the cell membrane. The enzyme catalyses a quinone + NADH + 5 H(+)(in) = a quinol + NAD(+) + 4 H(+)(out). Functionally, NDH-1 shuttles electrons from NADH, via FMN and iron-sulfur (Fe-S) centers, to quinones in the respiratory chain. The immediate electron acceptor for the enzyme in this species is believed to be ubiquinone. Couples the redox reaction to proton translocation (for every two electrons transferred, four hydrogen ions are translocated across the cytoplasmic membrane), and thus conserves the redox energy in a proton gradient. This subunit may bind ubiquinone. In Nocardioides sp. (strain ATCC BAA-499 / JS614), this protein is NADH-quinone oxidoreductase subunit H.